We begin with the raw amino-acid sequence, 578 residues long: Pentatricopeptide repeat-containing protein At4g22760 (578 aa).

13 PPR repeats span residues 68-102, 103-137, 138-168, 169-203, 204-230, 231-261, 262-292, 293-327, 330-364, 365-395, 396-430, 431-465, and 466-496; these read DSFS…GIPP, SSHA…GLCG, CVYV…IAEK, NTVS…DAVS, WNLI…MPLK, SPAS…MPQK, NGVS…MSKK, DKLV…NSYI, DEIT…GIKI, DDLL…LNKK, DTVS…KIPP, NVVT…NLEP, and SADH…MPMQ. Residues 501–576 form a type E motif region; it reads VWGALLLASG…TLGCSWVEGS (76 aa).

The protein belongs to the PPR family. PCMP-E subfamily.

The protein is Pentatricopeptide repeat-containing protein At4g22760 (PCMP-E6) of Arabidopsis thaliana (Mouse-ear cress).